The sequence spans 409 residues: Bone morphogenetic protein 4 (409 aa).

The signal sequence occupies residues 1–19 (MIPGNRMLMVVLLCQVLLG). Positions 20–293 (GASHASLIPE…ALTRRRRAKR (274 aa)) are excised as a propeptide. Phosphoserine is present on S91. The disordered stretch occupies residues 91 to 110 (SGEEEEEEQMPSGGLEYPER). N-linked (GlcNAc...) asparagine glycosylation is found at N144, N209, N351, and N366. 3 cysteine pairs are disulfide-bonded: C309–C374, C338–C406, and C342–C408.

This sequence belongs to the TGF-beta family. Homodimer; disulfide-linked. Interacts with GREM2. Part of a complex consisting of TWSG1 and CHRD. Interacts with the serine proteases, HTRA1 and HTRA3; the interaction with either inhibits BMP4-mediated signaling. The HTRA protease activity is required for this inhibition. Interacts with SOSTDC1. Interacts with FBN1 (via N-terminal domain) and FBN2. Interacts with type I receptor BMPR1A. Interacts with type II receptor BMPR2. Interacts with FSTL1; this interaction inhibits the activation of the BMP4/Smad1/5/8 signaling pathway. Interacts with SCUBE3. Interacts with TGFBR3.

It is found in the secreted. The protein resides in the extracellular space. The protein localises to the extracellular matrix. Its function is as follows. Growth factor of the TGF-beta superfamily that plays essential roles in many developmental processes, including neurogenesis, vascular development, angiogenesis and osteogenesis. Acts in concert with PTHLH/PTHRP to stimulate ductal outgrowth during embryonic mammary development and to inhibit hair follicle induction. Initiates the canonical BMP signaling cascade by associating with type I receptor BMPR1A and type II receptor BMPR2. Once all three components are bound together in a complex at the cell surface, BMPR2 phosphorylates and activates BMPR1A. In turn, BMPR1A propagates signal by phosphorylating SMAD1/5/8 that travel to the nucleus and act as activators and repressors of transcription of target genes. Positively regulates the expression of odontogenic development regulator MSX1 via inducing the IPO7-mediated import of SMAD1 to the nucleus. Required for MSX1-mediated mesenchymal molar tooth bud development beyond the bud stage, via promoting Wnt signaling. Acts as a positive regulator of odontoblast differentiation during mesenchymal tooth germ formation, expression is repressed during the bell stage by MSX1-mediated inhibition of CTNNB1 signaling. Able to induce its own expression in dental mesenchymal cells and also in the neighboring dental epithelial cells via an MSX1-mediated pathway. Can also signal through non-canonical BMP pathways such as ERK/MAP kinase, PI3K/Akt, or SRC cascades. For example, induces SRC phosphorylation which, in turn, activates VEGFR2, leading to an angiogenic response. The chain is Bone morphogenetic protein 4 (BMP4) from Oryctolagus cuniculus (Rabbit).